A 135-amino-acid polypeptide reads, in one-letter code: Small ribosomal subunit protein uS12 (135 aa).

A disordered region spans residues 1–23 (MPTINQLVRKGRHSKTTKSDSPA). At D102 the chain carries 3-methylthioaspartic acid.

Belongs to the universal ribosomal protein uS12 family. As to quaternary structure, part of the 30S ribosomal subunit. Contacts proteins S8 and S17. May interact with IF1 in the 30S initiation complex.

In terms of biological role, with S4 and S5 plays an important role in translational accuracy. Functionally, interacts with and stabilizes bases of the 16S rRNA that are involved in tRNA selection in the A site and with the mRNA backbone. Located at the interface of the 30S and 50S subunits, it traverses the body of the 30S subunit contacting proteins on the other side and probably holding the rRNA structure together. The combined cluster of proteins S8, S12 and S17 appears to hold together the shoulder and platform of the 30S subunit. The chain is Small ribosomal subunit protein uS12 from Lactobacillus gasseri (strain ATCC 33323 / DSM 20243 / BCRC 14619 / CIP 102991 / JCM 1131 / KCTC 3163 / NCIMB 11718 / NCTC 13722 / AM63).